Consider the following 205-residue polypeptide: Transcriptional regulator GfcR (205 aa).

The protein belongs to the purine/pyrimidine phosphoribosyltransferase family. GfcR subfamily.

The chain is Transcriptional regulator GfcR from Methanococcus vannielii (strain ATCC 35089 / DSM 1224 / JCM 13029 / OCM 148 / SB).